The chain runs to 142 residues: ATP synthase epsilon chain (142 aa).

This sequence belongs to the ATPase epsilon chain family. As to quaternary structure, F-type ATPases have 2 components, CF(1) - the catalytic core - and CF(0) - the membrane proton channel. CF(1) has five subunits: alpha(3), beta(3), gamma(1), delta(1), epsilon(1). CF(0) has three main subunits: a, b and c.

The protein localises to the cell membrane. Produces ATP from ADP in the presence of a proton gradient across the membrane. In Lactiplantibacillus plantarum (strain ATCC BAA-793 / NCIMB 8826 / WCFS1) (Lactobacillus plantarum), this protein is ATP synthase epsilon chain.